The sequence spans 483 residues: Cytochrome P450 monooxygenase stcF (483 aa).

Residue cysteine 424 participates in heme binding.

This sequence belongs to the cytochrome P450 family. Requires heme as cofactor.

It functions in the pathway mycotoxin biosynthesis; sterigmatocystin biosynthesis. Cytochrome P450 monooxygenase; part of the gene cluster that mediates the biosynthesis of sterigmatocystin (ST), a polyketide-derived furanocoumarin which is part of the most toxic and carcinogenic compounds among the known mycotoxins. The first step in the biosynthesis of sterigmatocystin is the production of hexanoate by the fatty acid synthase (FAS) units stcJ and stcK. The polyketide backbone is assembled by the non-reducing polyketide synthase stcA by condensation of the starter hexanoyl-CoA and 7 malonyl-CoA extender units followed by cyclization and release of norsolorinic acid. Norsolorinic acid is the first stable intermediate in the biosynthesis of sterigmatocystin and is converted into averantin (AVN) by the ketoreductase stcE which reduces the hexanoate ketone to an alcohol. Averantin is then oxidized into 5'-hydroxyaverantin (HAVN) by the cytochrome P450 monooxygenase stcF. 5'-hydroxyaverantin is further converted to 5'-oxyaverantin (OAVN) by the 5'-hydroxyaverantin dehydrogenase stcG. The next step is the conversion of OAVN into averufin (AVF) which is catalyzed by a yet to be identified enzyme. The cytochrome P450 monooxygenase stcB and the flavin-binding monooxygenase stcW are both required for the conversion of averufin to 1-hydroxyversicolorone. The esterase stcI probably catalyzes the formation of versiconal hemiacetal acetate from 1-hydroxyversicolorone. The oxydoreductase stcN then probably catalyzes the biosynthetic step from versiconal to versicolorin B (VERB). The next step is performed by the versicolorin B desaturase stcL to produce versicolorin A (VERA). The ketoreductase stcU and the cytochrome P450 monooxygenase stcS are involved in the conversion of versicolorin A to demethylsterigmatocystin. The Baeyer-Villiger oxidas stcQ and the reductase stcR might be involved in the biosynthetic step from versicolorin A to demethylsterigmatocystin. The final step in the biosynthesis of sterigmatocystin is the methylation of demethylsterigmatocystin catalyzed by the methyltransferase stcP. The protein is Cytochrome P450 monooxygenase stcF of Emericella nidulans (strain FGSC A4 / ATCC 38163 / CBS 112.46 / NRRL 194 / M139) (Aspergillus nidulans).